The sequence spans 459 residues: DIMBOA UDP-glucosyltransferase BX8 (459 aa).

His-19 serves as the catalytic Proton acceptor. His-19 lines the an anthocyanidin pocket. Asp-119 (charge relay) is an active-site residue. Positions 141, 340, 342, 357, 360, 361, 362, and 365 each coordinate UDP-alpha-D-glucose. Gly-380 contacts an anthocyanidin. The UDP-alpha-D-glucose site is built by Asp-381 and Gln-382.

It belongs to the UDP-glycosyltransferase family. The cofactor is Mg(2+). Ca(2+) serves as cofactor. Expressed at the same levels in roots and shoots.

The enzyme catalyses DIMBOA + UDP-alpha-D-glucose = DIMBOA beta-D-glucoside + UDP + H(+). The catalysed reaction is DIBOA + UDP-alpha-D-glucose = DIBOA beta-D-glucoside + UDP + H(+). Functionally, glucosyltransferase involved in the last step of benzoxazinoid glucoside biosynthesis. Catalyzes the glucosylation of hydroxamic acids utilizing UDP-glucose as glucose doner, reducing the toxicity of these natural insecticides for storage. Can use DIMBOA and DIBOA as substrates, HMBOA (2-hydroxy-7-methoxy-2H-1,4-benzoxazin-3(4H)-one) and HBOA (2-hydroxy-2H-1,4-benzoxazin-3(4H)-one) with a lower efficiency, but not indole acetic acid or quercitin. The chain is DIMBOA UDP-glucosyltransferase BX8 (Bx8) from Zea mays (Maize).